A 264-amino-acid chain; its full sequence is Apolipoprotein A-I (264 aa).

An N-terminal signal peptide occupies residues 1-18 (MKAVLLVVAALFLAGSQA). A run of 2 repeats spans residues 67 to 88 (LRLS…ADFG) and 89 to 110 (LATQ…QIVS). The segment at 67–264 (LRLSDNWDTL…DQASKQLAAQ (198 aa)) is 10 X approximate tandem repeats. A 3; half-length repeat occupies 111–121 (EDLQDVKHKVQ). A run of 3 repeats spans residues 122–143 (PYLE…EKVR), 144–165 (PLGI…EKLT), and 166–187 (PLGE…TQLA). Residues 188-207 (PFSEEMRQRLAKRLEELKDS) form a 7; truncated repeat. Met193 is modified (methionine sulfoxide). The stretch at 208-229 (ATLADYHAKASEHLKMLGEKAK) is repeat 8. A 9; half-length repeat occupies 230 to 240 (PALEDLRQGLL). Copy 10 of the repeat occupies 241 to 264 (PVLENLKASILSSIDQASKQLAAQ).

This sequence belongs to the apolipoprotein A1/A4/E family. In terms of assembly, homodimer. Interacts with APOA1BP and CLU. Component of a sperm activating protein complex (SPAP), consisting of APOA1, an immunoglobulin heavy chain, an immunoglobulin light chain and albumin. Interacts with NDRG1. Interacts with SCGB3A2. Interacts with NAXE and YJEFN3. Post-translationally, glycosylated. Palmitoylated. In terms of processing, phosphorylation sites are present in the extracellular medium.

Its subcellular location is the secreted. Functionally, participates in the reverse transport of cholesterol from tissues to the liver for excretion by promoting cholesterol efflux from tissues and by acting as a cofactor for the lecithin cholesterol acyltransferase (LCAT). As part of the SPAP complex, activates spermatozoa motility. The chain is Apolipoprotein A-I (APOA1) from Cavia aperea (Brazilian guinea pig).